Here is a 530-residue protein sequence, read N- to C-terminus: UDP-glucuronosyltransferase 1A10 (530 aa).

The N-terminal stretch at 1-25 (MARAGWTSPVPLCVCLLLTCGFAEA) is a signal peptide. 3 N-linked (GlcNAc...) asparagine glycosylation sites follow: N71, N292, and N344. A helical membrane pass occupies residues 488–504 (VIGFLLAVVLTVAFITF).

Belongs to the UDP-glycosyltransferase family. As to quaternary structure, homodimer. Homooligomer. Interacts with UGT1A1, UGT1A3, UGT1A4, UGT1A6, UGT1A7, UGT1A8 and UGT1A9 to form heterodimers. Isoform 1 interacts with isoform 2/i2 suggesting that oligomerization is involved in negative regulation of transferase activity by isoform 2. Isoform 1 also interacts with respective i2 isoforms of UGT1A1, UGT1A3, UGT1A4, UGT1A6, UGT1A7, UGT1A8 and UGT1A9. In terms of tissue distribution, liver and colon. Isoform 1 and isoform 2 are expressed in colon, esophagus and small intestine; isoform 2 but not isoform 1 is expressed in liver or kidney.

The protein localises to the endoplasmic reticulum membrane. It carries out the reaction glucuronate acceptor + UDP-alpha-D-glucuronate = acceptor beta-D-glucuronoside + UDP + H(+). The enzyme catalyses 17beta-estradiol + UDP-alpha-D-glucuronate = 17beta-estradiol 3-O-(beta-D-glucuronate) + UDP + H(+). It catalyses the reaction 17beta-estradiol + UDP-alpha-D-glucuronate = 17beta-estradiol 17-O-(beta-D-glucuronate) + UDP + H(+). The catalysed reaction is 17alpha-estradiol + UDP-alpha-D-glucuronate = 17alpha-estradiol 3-O-(beta-D-glucuronate) + UDP + H(+). It carries out the reaction 16alpha,17beta-estriol + UDP-alpha-D-glucuronate = 16alpha,17beta-estriol 3-O-(beta-D-glucuronate) + UDP + H(+). The enzyme catalyses 16beta,17beta-estriol + UDP-alpha-D-glucuronate = 16beta,17beta-estriol 3-O-(beta-D-glucuronate) + UDP + H(+). It catalyses the reaction 16alpha,17alpha-estriol + UDP-alpha-D-glucuronate = 16alpha,17alpha-estriol 3-O-(beta-D-glucuronate) + UDP + H(+). The catalysed reaction is 16alpha-hydroxyestrone + UDP-alpha-D-glucuronate = 16alpha-hydroxyestrone 3-O-(beta-D-glucuronate) + UDP + H(+). It carries out the reaction estrone + UDP-alpha-D-glucuronate = estrone 3-O-(beta-D-glucuronate) + UDP + H(+). The enzyme catalyses prunetin + UDP-alpha-D-glucuronate = prunetin-4'-O-beta-D-glucuronide + UDP. It catalyses the reaction (5Z,8Z,11Z,14Z)-eicosatetraenoate + UDP-alpha-D-glucuronate = O-[(5Z),(8Z),(11Z),(14Z)-eicosatetraenoyl]-beta-D-glucuronate + UDP. The catalysed reaction is 15-hydroxy-(5Z,8Z,11Z,13E)-eicosatetraenoate + UDP-alpha-D-glucuronate = 15-O-(beta-D-glucuronosyl)-(5Z,8Z,11Z,14Z)-eicosatetraenoate + UDP + H(+). It carries out the reaction prostaglandin B1 + UDP-alpha-D-glucuronate = 15-O-(beta-D-glucuronosyl)-prostaglandin B1 + UDP + H(+). The enzyme catalyses (E)-ferulate + UDP-alpha-D-glucuronate = (E)-4-O-(beta-D-glucuronosyl)-ferulate + UDP + H(+). It catalyses the reaction (E)-ferulate + UDP-alpha-D-glucuronate = (E)-ferulic acid beta-D-glucuronate ester + UDP. The catalysed reaction is losartan + UDP-alpha-D-glucuronate = losartan-2-N-beta-D-glucuronide + UDP. It carries out the reaction candesartan + UDP-alpha-D-glucuronate = candesartan O-beta-D-glucuronoside + UDP. The enzyme catalyses candesartan + UDP-alpha-D-glucuronate = candesartan-2-N-beta-D-glucuronide + UDP. It catalyses the reaction zolasartan + UDP-alpha-D-glucuronate = zolarsartan-1-N-beta-D-glucuronide + UDP. UDP-glucuronosyltransferase (UGT) that catalyzes phase II biotransformation reactions in which lipophilic substrates are conjugated with glucuronic acid to increase the metabolite's water solubility, thereby facilitating excretion into either the urine or bile. Essential for the elimination and detoxification of drugs, xenobiotics and endogenous compounds. Catalyzes the glucuronidation of endogenous estrogen hormones such as estradiol, estrone and estriol. Involved in the glucuronidation of arachidonic acid (AA) and AA-derived eicosanoids including 15-HETE and PGB1. Involved in the glucuronidation of the phytochemical ferulic acid at the phenolic or the carboxylic acid group. Also catalyzes the glucuronidation of the isoflavones genistein, daidzein, glycitein, formononetin, biochanin A and prunetin, which are phytoestrogens with anticancer and cardiovascular properties. Involved in the glucuronidation of the AGTR1 angiotensin receptor antagonist losartan, caderastan and zolarsatan, drugs which can inhibit the effect of angiotensin II. Functionally, lacks UGT glucuronidation activity but acts as a negative regulator of isoform 1. This is UDP-glucuronosyltransferase 1A10 from Homo sapiens (Human).